Reading from the N-terminus, the 257-residue chain is Beta-fibrinogenase mucrofibrase-3 (257 aa).

Positions 1-18 (MVLIRVLANLLILQLSYA) are cleaved as a signal peptide. The propeptide occupies 19–24 (QKSSEL). A Peptidase S1 domain is found at 25-248 (VIGGDECNIN…HLDWIKGIIA (224 aa)). Disulfide bonds link Cys31–Cys162, Cys49–Cys65, Cys97–Cys255, Cys141–Cys209, Cys173–Cys188, and Cys199–Cys224. Active-site charge relay system residues include His64 and Asp109. The active-site Charge relay system is Ser203.

This sequence belongs to the peptidase S1 family. Snake venom subfamily. In terms of assembly, monomer. As to expression, expressed by the venom gland.

The protein resides in the secreted. In terms of biological role, snake venom serine protease with fibrinogenolytic activities. Cleaves beta-chain of fibrinogen (FGB) efficiently and shows relatively lower activity on alpha-chain. This Protobothrops mucrosquamatus (Taiwan habu) protein is Beta-fibrinogenase mucrofibrase-3.